Consider the following 1275-residue polypeptide: Inner capsid protein lambda-1 (1275 aa).

The span at Met1–Ser12 shows a compositional bias: basic residues. Residues Met1 to Pro149 are disordered. Basic and acidic residues-rich tracts occupy residues Asp18–Asn35 and Asn75–Lys117. The segment covering Ala118–Pro149 has biased composition (polar residues). Residues Tyr181 to His203 form a C2H2-type zinc finger.

This sequence belongs to the orthoreovirus lambda-1 protein family. Homodecamer; each decamer is made up of two conformers of VP2, called VP2A and VP2B. 12 homodecamers assemble to form an icosahedral capsid. Interacts with protein mu-NS; in viral inclusions. Mg(2+) is required as a cofactor. Mn(2+) serves as cofactor.

It is found in the virion. It carries out the reaction ATP + H2O = ADP + phosphate + H(+). In terms of biological role, inner capsid protein that self-assembles to form an icosahedral capsid with a T=2 symmetry, which consists of 120 copies of VP2, with channels at each of its five-fold vertices. This capsid constitutes the innermost concentric layer of the viral mature particle. Functionally, displays NTPase, RNA 5'-triphosphatase (RTPase) and RNA helicase activities. Helicase activity might be involved in unwinding or reannealing dsRNA during RNA synthesis. RTPase enzymatic activity represents the first step in RNA capping, which yields a 5'-diphosphorylated plus-strand RNA. In Reovirus type 3 (strain Dearing) (T3D), this protein is Inner capsid protein lambda-1 (L3).